The sequence spans 293 residues: Ribosomal protein L11 methyltransferase (293 aa).

S-adenosyl-L-methionine is bound by residues Thr-145, Gly-166, Asp-188, and Asn-230.

This sequence belongs to the methyltransferase superfamily. PrmA family.

Its subcellular location is the cytoplasm. It catalyses the reaction L-lysyl-[protein] + 3 S-adenosyl-L-methionine = N(6),N(6),N(6)-trimethyl-L-lysyl-[protein] + 3 S-adenosyl-L-homocysteine + 3 H(+). In terms of biological role, methylates ribosomal protein L11. The polypeptide is Ribosomal protein L11 methyltransferase (Shewanella baltica (strain OS195)).